We begin with the raw amino-acid sequence, 375 residues long: tRNA-specific 2-thiouridylase MnmA (375 aa).

Residues 16–23 (GMSGGVDS) and Met42 each bind ATP. An interaction with target base in tRNA region spans residues 102-104 (NPD). Residue Cys107 is the Nucleophile of the active site. Cys107 and Cys203 form a disulfide bridge. Gly131 contacts ATP. Residues 153 to 155 (KDQ) form an interaction with tRNA region. The active-site Cysteine persulfide intermediate is the Cys203. An interaction with tRNA region spans residues 315-316 (RY).

This sequence belongs to the MnmA/TRMU family.

It localises to the cytoplasm. It carries out the reaction S-sulfanyl-L-cysteinyl-[protein] + uridine(34) in tRNA + AH2 + ATP = 2-thiouridine(34) in tRNA + L-cysteinyl-[protein] + A + AMP + diphosphate + H(+). Catalyzes the 2-thiolation of uridine at the wobble position (U34) of tRNA, leading to the formation of s(2)U34. The polypeptide is tRNA-specific 2-thiouridylase MnmA (Pseudomonas paraeruginosa (strain DSM 24068 / PA7) (Pseudomonas aeruginosa (strain PA7))).